A 391-amino-acid chain; its full sequence is UDP-N-acetylglucosamine--N-acetylmuramyl-(pentapeptide) pyrophosphoryl-undecaprenol N-acetylglucosamine transferase (391 aa).

Residues 11–13 (TGG), R176, S206, and Q312 each bind UDP-N-acetyl-alpha-D-glucosamine.

Belongs to the glycosyltransferase 28 family. MurG subfamily.

The protein resides in the cell inner membrane. It carries out the reaction di-trans,octa-cis-undecaprenyl diphospho-N-acetyl-alpha-D-muramoyl-L-alanyl-D-glutamyl-meso-2,6-diaminopimeloyl-D-alanyl-D-alanine + UDP-N-acetyl-alpha-D-glucosamine = di-trans,octa-cis-undecaprenyl diphospho-[N-acetyl-alpha-D-glucosaminyl-(1-&gt;4)]-N-acetyl-alpha-D-muramoyl-L-alanyl-D-glutamyl-meso-2,6-diaminopimeloyl-D-alanyl-D-alanine + UDP + H(+). It functions in the pathway cell wall biogenesis; peptidoglycan biosynthesis. Its function is as follows. Cell wall formation. Catalyzes the transfer of a GlcNAc subunit on undecaprenyl-pyrophosphoryl-MurNAc-pentapeptide (lipid intermediate I) to form undecaprenyl-pyrophosphoryl-MurNAc-(pentapeptide)GlcNAc (lipid intermediate II). This chain is UDP-N-acetylglucosamine--N-acetylmuramyl-(pentapeptide) pyrophosphoryl-undecaprenol N-acetylglucosamine transferase, found in Treponema denticola (strain ATCC 35405 / DSM 14222 / CIP 103919 / JCM 8153 / KCTC 15104).